The sequence spans 38 residues: Large ribosomal subunit protein bL36 (38 aa).

This sequence belongs to the bacterial ribosomal protein bL36 family.

This chain is Large ribosomal subunit protein bL36, found in Pseudothermotoga lettingae (strain ATCC BAA-301 / DSM 14385 / NBRC 107922 / TMO) (Thermotoga lettingae).